Reading from the N-terminus, the 157-residue chain is S-ribosylhomocysteine lyase (157 aa).

Positions 54, 58, and 124 each coordinate Fe cation.

Belongs to the LuxS family. In terms of assembly, homodimer. Requires Fe cation as cofactor.

The catalysed reaction is S-(5-deoxy-D-ribos-5-yl)-L-homocysteine = (S)-4,5-dihydroxypentane-2,3-dione + L-homocysteine. In terms of biological role, involved in the synthesis of autoinducer 2 (AI-2) which is secreted by bacteria and is used to communicate both the cell density and the metabolic potential of the environment. The regulation of gene expression in response to changes in cell density is called quorum sensing. Catalyzes the transformation of S-ribosylhomocysteine (RHC) to homocysteine (HC) and 4,5-dihydroxy-2,3-pentadione (DPD). The sequence is that of S-ribosylhomocysteine lyase from Lacticaseibacillus paracasei (strain ATCC 334 / BCRC 17002 / CCUG 31169 / CIP 107868 / KCTC 3260 / NRRL B-441) (Lactobacillus paracasei).